An 85-amino-acid polypeptide reads, in one-letter code: Small protein YqaH (85 aa).

Interacts with domain IV of DnaA and with Spo0A.

Binds to and counteracts DnaA replication initiation activity; overexpression decreases the number of replication initiation events. Also antagonizes DnaA's transcriptional regulation activity. Ectopic expression during exponential phase stops cell growth 2 hours after induction, leading to filamentation, aberrant chromosome segregation and septoid-trapped nucleoids. Overexpression during sporulation onset leads to dramatic reductions in spore formation. This Bacillus subtilis (strain 168) protein is Small protein YqaH (yqaH).